The primary structure comprises 221 residues: Iron-sulfur cluster repair protein YtfE (221 aa).

This sequence belongs to the RIC family. YtfE subfamily. In terms of assembly, homodimer.

It localises to the cytoplasm. Di-iron-containing protein involved in the repair of iron-sulfur clusters damaged by oxidative and nitrosative stress conditions. This chain is Iron-sulfur cluster repair protein YtfE, found in Dickeya chrysanthemi (strain Ech1591) (Dickeya zeae (strain Ech1591)).